The primary structure comprises 710 residues: Dynein axonemal assembly factor 3 homolog (710 aa).

Residues 403–487 (GAEAGAGAGP…DSDPAAAAST (85 aa)) are disordered. The span at 404-416 (AEAGAGAGPGGEA) shows a compositional bias: gly residues. The span at 417-438 (AAGASSSSGKEEAAAAAAAGKE) shows a compositional bias: low complexity. The span at 453–462 (SGSGAPGAGT) shows a compositional bias: gly residues. The span at 478 to 487 (DSDPAAAAST) shows a compositional bias: low complexity.

The protein belongs to the DNAAF3 family.

Its subcellular location is the cytoplasm. Its function is as follows. Required for the assembly of axonemal inner and outer dynein arms. Involved in preassembly of dyneins into complexes before their transport into cilia. The protein is Dynein axonemal assembly factor 3 homolog (DAB1) of Chlamydomonas reinhardtii (Chlamydomonas smithii).